Consider the following 221-residue polypeptide: Large ribosomal subunit protein uL3 (221 aa).

It belongs to the universal ribosomal protein uL3 family. In terms of assembly, part of the 50S ribosomal subunit. Forms a cluster with proteins L14 and L19.

Functionally, one of the primary rRNA binding proteins, it binds directly near the 3'-end of the 23S rRNA, where it nucleates assembly of the 50S subunit. The sequence is that of Large ribosomal subunit protein uL3 from Chlamydia muridarum (strain MoPn / Nigg).